Reading from the N-terminus, the 122-residue chain is Large ribosomal subunit protein uL18 (122 aa).

A disordered region spans residues 1-27; that stretch reads MSNLSRKQQTQKRHRRLRRHLNGTAQR. Positions 9–21 are enriched in basic residues; the sequence is QTQKRHRRLRRHL.

Belongs to the universal ribosomal protein uL18 family. As to quaternary structure, part of the 50S ribosomal subunit; part of the 5S rRNA/L5/L18/L25 subcomplex. Contacts the 5S and 23S rRNAs.

Its function is as follows. This is one of the proteins that bind and probably mediate the attachment of the 5S RNA into the large ribosomal subunit, where it forms part of the central protuberance. This is Large ribosomal subunit protein uL18 from Prochlorococcus marinus (strain MIT 9303).